A 312-amino-acid polypeptide reads, in one-letter code: GATA transcription factor 6 (312 aa).

Disordered stretches follow at residues 1-33 (MESV…VDDL), 56-77 (QRKR…STAD), and 136-186 (KSQH…PLWL). Over residues 56–71 (QRKRGVSDENTLHRSN) the composition is skewed to basic and acidic residues. Over residues 142–151 (VKTRPKRART) the composition is skewed to basic residues. A Nuclear localization signal motif is present at residues 143-150 (KTRPKRAR). Residues 157–186 (SHGSQSLTDSSSSSTTSSSSSPRPSSPLWL) are compositionally biased toward low complexity. The GATA-type zinc-finger motif lies at 217–271 (QTQTRQCGHCGVQKTPQWRAGPLGAKTLCNACGVRYKSGRLLPEYRPACSPTFSS).

This sequence belongs to the type IV zinc-finger family. Class A subfamily.

Its subcellular location is the nucleus. In terms of biological role, transcriptional activator that specifically binds 5'-GATA-3' or 5'-GAT-3' motifs within gene promoters. May be involved in the regulation of some light-responsive genes. This is GATA transcription factor 6 (GATA6) from Arabidopsis thaliana (Mouse-ear cress).